The primary structure comprises 628 residues: Chaperone protein DnaK (628 aa).

Threonine 197 is subject to Phosphothreonine; by autocatalysis. Basic and acidic residues predominate over residues 595-604 (AEAMYKKEQG). Residues 595–628 (AEAMYKKEQGEQAGAQPNQKAKKDDDDVIDAEVE) are disordered.

Belongs to the heat shock protein 70 family.

Acts as a chaperone. This is Chaperone protein DnaK from Aliarcobacter butzleri (strain RM4018) (Arcobacter butzleri).